Here is a 446-residue protein sequence, read N- to C-terminus: Methylenetetrahydrofolate--tRNA-(uracil-5-)-methyltransferase TrmFO (446 aa).

8–13 (GGGLAG) lines the FAD pocket.

It belongs to the MnmG family. TrmFO subfamily. It depends on FAD as a cofactor.

Its subcellular location is the cytoplasm. It carries out the reaction uridine(54) in tRNA + (6R)-5,10-methylene-5,6,7,8-tetrahydrofolate + NADH + H(+) = 5-methyluridine(54) in tRNA + (6S)-5,6,7,8-tetrahydrofolate + NAD(+). It catalyses the reaction uridine(54) in tRNA + (6R)-5,10-methylene-5,6,7,8-tetrahydrofolate + NADPH + H(+) = 5-methyluridine(54) in tRNA + (6S)-5,6,7,8-tetrahydrofolate + NADP(+). Catalyzes the folate-dependent formation of 5-methyl-uridine at position 54 (M-5-U54) in all tRNAs. This chain is Methylenetetrahydrofolate--tRNA-(uracil-5-)-methyltransferase TrmFO, found in Zymomonas mobilis subsp. mobilis (strain ATCC 31821 / ZM4 / CP4).